The primary structure comprises 259 residues: Probable 6-phosphogluconolactonase 2 (259 aa).

Belongs to the glucosamine/galactosamine-6-phosphate isomerase family. 6-phosphogluconolactonase subfamily.

It is found in the cytoplasm. Its subcellular location is the cytosol. It carries out the reaction 6-phospho-D-glucono-1,5-lactone + H2O = 6-phospho-D-gluconate + H(+). It functions in the pathway carbohydrate degradation; pentose phosphate pathway; D-ribulose 5-phosphate from D-glucose 6-phosphate (oxidative stage): step 2/3. Its function is as follows. Catalyzes the hydrolysis of 6-phosphogluconolactone to 6-phosphogluconate. In Arabidopsis thaliana (Mouse-ear cress), this protein is Probable 6-phosphogluconolactonase 2.